The following is a 384-amino-acid chain: 8-amino-7-oxononanoate synthase (384 aa).

Arg21 lines the substrate pocket. Residue 108–109 (GF) participates in pyridoxal 5'-phosphate binding. Position 133 (His133) interacts with substrate. Positions 179, 207, and 233 each coordinate pyridoxal 5'-phosphate. N6-(pyridoxal phosphate)lysine is present on Lys236. A substrate-binding site is contributed by Thr352.

The protein belongs to the class-II pyridoxal-phosphate-dependent aminotransferase family. BioF subfamily. As to quaternary structure, homodimer. It depends on pyridoxal 5'-phosphate as a cofactor.

It carries out the reaction 6-carboxyhexanoyl-[ACP] + L-alanine + H(+) = (8S)-8-amino-7-oxononanoate + holo-[ACP] + CO2. It participates in cofactor biosynthesis; biotin biosynthesis. Functionally, catalyzes the decarboxylative condensation of pimeloyl-[acyl-carrier protein] and L-alanine to produce 8-amino-7-oxononanoate (AON), [acyl-carrier protein], and carbon dioxide. The sequence is that of 8-amino-7-oxononanoate synthase from Escherichia coli O7:K1 (strain IAI39 / ExPEC).